A 332-amino-acid polypeptide reads, in one-letter code: Anthranilate phosphoribosyltransferase (332 aa).

5-phospho-alpha-D-ribose 1-diphosphate-binding positions include G79, 82–83 (GD), T87, 89–92 (NIST), 107–115 (KHGNRSVSS), and S119. Position 79 (G79) interacts with anthranilate. S91 contacts Mg(2+). N110 is a binding site for anthranilate. R165 contacts anthranilate. Residues D223 and E224 each coordinate Mg(2+).

The protein belongs to the anthranilate phosphoribosyltransferase family. As to quaternary structure, homodimer. The cofactor is Mg(2+).

The catalysed reaction is N-(5-phospho-beta-D-ribosyl)anthranilate + diphosphate = 5-phospho-alpha-D-ribose 1-diphosphate + anthranilate. It functions in the pathway amino-acid biosynthesis; L-tryptophan biosynthesis; L-tryptophan from chorismate: step 2/5. Catalyzes the transfer of the phosphoribosyl group of 5-phosphorylribose-1-pyrophosphate (PRPP) to anthranilate to yield N-(5'-phosphoribosyl)-anthranilate (PRA). This is Anthranilate phosphoribosyltransferase from Vibrio parahaemolyticus serotype O3:K6 (strain RIMD 2210633).